Consider the following 92-residue polypeptide: MGRSLKKGPFVADHLLKKIEKLNDNNRKEVIKTWSRASTILPLMVGHTIAVHNGRQHVPVFVNEQMVGHKLGEFAPTRTYRGHGKSDKKAGR.

Belongs to the universal ribosomal protein uS19 family.

Functionally, protein S19 forms a complex with S13 that binds strongly to the 16S ribosomal RNA. This is Small ribosomal subunit protein uS19 from Nostoc punctiforme (strain ATCC 29133 / PCC 73102).